Here is a 73-residue protein sequence, read N- to C-terminus: MKEKDYWEEAWLTSCTSIHDHHCDCGSWRDHLWTLCALDDADLAAAADIIEREEADGGEDFGFVDGDPGDAGG.

This is an uncharacterized protein from Sus scrofa (Pig).